We begin with the raw amino-acid sequence, 280 residues long: Monoacylglycerol lipase (280 aa).

The Nucleophile role is filled by Ser-111. Residues Asp-227 and His-257 each act as charge relay system in the active site.

It belongs to the AB hydrolase superfamily.

The protein resides in the secreted. It is found in the cell wall. The catalysed reaction is Hydrolyzes glycerol monoesters of long-chain fatty acids.. Its function is as follows. Contributes to cell growth, probably by hydrolyzing exogenous lipids. Catalyzes the hydrolysis of monoacylglycerols (MAG) with fatty acid chains ranging from C14 to C18, with a maximum activity on monoolein. Is unable to hydrolyze long-chain diacylglycerol (DAG). This is Monoacylglycerol lipase from Mycolicibacterium smegmatis (strain ATCC 700084 / mc(2)155) (Mycobacterium smegmatis).